The primary structure comprises 68 residues: MQIMVRDNNVDQALRALKKKLQREGVYREMKLRRHYEKPSEKRAREKAAAVRRARKMERKRMERDGIK.

Positions 37–49 (EKPSEKRAREKAA) are enriched in basic and acidic residues. The disordered stretch occupies residues 37-68 (EKPSEKRAREKAAAVRRARKMERKRMERDGIK). Residues 50–59 (AVRRARKMER) show a composition bias toward basic residues.

This sequence belongs to the bacterial ribosomal protein bS21 family.

The sequence is that of Small ribosomal subunit protein bS21 from Erythrobacter litoralis (strain HTCC2594).